The chain runs to 51 residues: Large ribosomal subunit protein eL40 (51 aa).

This sequence belongs to the eukaryotic ribosomal protein eL40 family.

This Thermofilum pendens (strain DSM 2475 / Hrk 5) protein is Large ribosomal subunit protein eL40.